A 445-amino-acid chain; its full sequence is Enolase (445 aa).

Substrate contacts are provided by His-165 and Glu-174. The Proton donor role is filled by Glu-217. Mg(2+) contacts are provided by Asp-252, Glu-303, and Asp-330. The substrate site is built by Glu-303 and Asp-330. Lys-355 serves as the catalytic Proton acceptor. Substrate-binding positions include 382–385 and Lys-406; that span reads SHRS.

This sequence belongs to the enolase family. Homodimer. Mg(2+) is required as a cofactor.

The protein localises to the cytoplasm. It catalyses the reaction (2R)-2-phosphoglycerate = phosphoenolpyruvate + H2O. It participates in carbohydrate degradation; glycolysis; pyruvate from D-glyceraldehyde 3-phosphate: step 4/5. The protein is Enolase (ENO) of Eimeria tenella (Coccidian parasite).